We begin with the raw amino-acid sequence, 232 residues long: Flavin-dependent thymidylate synthase (232 aa).

One can recognise a ThyX domain in the interval 1-204 (MKIALLQHTP…PTIFRDAGPG (204 aa)). Residues Ser55, 79 to 81 (RHR), and Gln87 each bind FAD. DUMP contacts are provided by residues 76 to 79 (QLVR), 87 to 91 (QQSQR), and Arg143. The short motif at 79–89 (RHRIASYSQQS) is the ThyX motif element. Residues 159-161 (NAR) and His165 contribute to the FAD site. DUMP is bound at residue Arg170. Arg170 acts as the Involved in ionization of N3 of dUMP, leading to its activation in catalysis.

It belongs to the thymidylate synthase ThyX family. Homotetramer. Requires FAD as cofactor.

It carries out the reaction dUMP + (6R)-5,10-methylene-5,6,7,8-tetrahydrofolate + NADPH + H(+) = dTMP + (6S)-5,6,7,8-tetrahydrofolate + NADP(+). It participates in pyrimidine metabolism; dTTP biosynthesis. Functionally, catalyzes the reductive methylation of 2'-deoxyuridine-5'-monophosphate (dUMP) to 2'-deoxythymidine-5'-monophosphate (dTMP) while utilizing 5,10-methylenetetrahydrofolate (mTHF) as the methyl donor, and NADPH and FADH(2) as the reductant. The polypeptide is Flavin-dependent thymidylate synthase (Geobacter sulfurreducens (strain ATCC 51573 / DSM 12127 / PCA)).